Consider the following 163-residue polypeptide: MANCYFDVSSNGKPLGRIVFELYDDVVPRTTNNFRQLCLNPPGKGFKHSIFHRVIPDFMIQGGDFTNGNGTGGESIYGKKFEDENFQKKHVERGMLSMANAGPNTNGSQFFITVTKTPWLDGKHVVFGKVIEGYDQVVKAMEKTGSQSGKTSSVLKIEDCGTL.

Residues 5-162 (YFDVSSNGKP…SVLKIEDCGT (158 aa)) enclose the PPIase cyclophilin-type domain.

The protein belongs to the cyclophilin-type PPIase family. PPIase A subfamily.

Its subcellular location is the cytoplasm. The enzyme catalyses [protein]-peptidylproline (omega=180) = [protein]-peptidylproline (omega=0). Binds cyclosporin A (CsA). CsA mediates some of its effects via an inhibitory action on PPIase. Functionally, PPIases accelerate the folding of proteins. It catalyzes the cis-trans isomerization of proline imidic peptide bonds in oligopeptides. In Uromyces fabae (Rust fungus), this protein is Peptidyl-prolyl cis-trans isomerase (PIG28).